We begin with the raw amino-acid sequence, 296 residues long: Chronophin (296 aa).

Asp25 serves as the catalytic Nucleophile. The Mg(2+) site is built by Asp25 and Asp27. Asp27 serves as the catalytic Proton donor. Residues 58–60 (SNN), His182, and Lys213 each bind substrate. Position 238 (Asp238) interacts with Mg(2+).

The protein belongs to the HAD-like hydrolase superfamily. As to quaternary structure, homodimer. It depends on Mg(2+) as a cofactor. Ubiquitously expressed (at protein level). Highly expressed in all the regions of central nerve system except the spinal cord. Also expressed at high level in liver and testis. In fetus, it is weakly expressed in all organs except brain.

The protein localises to the cytoplasm. It is found in the cytosol. Its subcellular location is the cytoskeleton. The protein resides in the cell projection. It localises to the ruffle membrane. The protein localises to the lamellipodium membrane. It is found in the cell membrane. The catalysed reaction is pyridoxal 5'-phosphate + H2O = pyridoxal + phosphate. It catalyses the reaction pyridoxine 5'-phosphate + H2O = pyridoxine + phosphate. The enzyme catalyses pyridoxamine + phosphate = pyridoxamine 5'-phosphate + H2O. It carries out the reaction O-phospho-L-seryl-[protein] + H2O = L-seryl-[protein] + phosphate. Its activity is regulated as follows. Inhibited by NaF, Zn(2+), Ca(2+), Mn(2+) and EDTA. Functions as a pyridoxal phosphate (PLP) phosphatase, which also catalyzes the dephosphorylation of pyridoxine 5'-phosphate (PNP) and pyridoxamine 5'-phosphate (PMP), with order of substrate preference PLP &gt; PNP &gt; PMP and therefore plays a role in vitamin B6 metabolism. Also functions as a protein serine phosphatase that specifically dephosphorylates 'Ser-3' in proteins of the actin-depolymerizing factor (ADF)/cofilin family like CFL1 and DSTN. Thereby, regulates cofilin-dependent actin cytoskeleton reorganization, being required for normal progress through mitosis and normal cytokinesis. Does not dephosphorylate phosphothreonines in LIMK1. Does not dephosphorylate peptides containing phosphotyrosine. This is Chronophin from Homo sapiens (Human).